Consider the following 368-residue polypeptide: MQFIDQAEIEVQGGKGGDGMVSFRREKYVPAGGPSGGNGGRGGSVIFEADANLQTLLDFRYARIFKAEDGKKGGSSNCTGANGKDVVVQVPCGTMVYDLDGECLLGDLVSPGQRLCVAAGGKGGLGNQHFLSNRNRAPEYALPGLEGEQRQLRLELKLLAEVGIIGLPNAGKSTLIAALSAARPKIADYPFTTLVPNLGVVRKPTGDGTVFADIPGLIEGAAAGIGLGHEFLRHIERTRLLLHVLDVTAGDPIANFRVIQQELDAYGRGITEKPQIIALNKIDALDGEMIGEIETELKRFSTAPCLHISAATRRGLDDLMQLVWQWLDEMAAADAEAQRLLELELQAQAAMNNPFNSDVPIDGVTYSS.

Residues 1–159 (MQFIDQAEIE…RQLRLELKLL (159 aa)) enclose the Obg domain. The 169-residue stretch at 160–328 (AEVGIIGLPN…LMQLVWQWLD (169 aa)) folds into the OBG-type G domain. GTP contacts are provided by residues 166-173 (GLPNAGKS), 191-195 (FTTLV), 213-216 (DIPG), 280-283 (NKID), and 309-311 (SAA). Ser173 and Thr193 together coordinate Mg(2+).

It belongs to the TRAFAC class OBG-HflX-like GTPase superfamily. OBG GTPase family. In terms of assembly, monomer. Mg(2+) serves as cofactor.

It localises to the cytoplasm. In terms of biological role, an essential GTPase which binds GTP, GDP and possibly (p)ppGpp with moderate affinity, with high nucleotide exchange rates and a fairly low GTP hydrolysis rate. Plays a role in control of the cell cycle, stress response, ribosome biogenesis and in those bacteria that undergo differentiation, in morphogenesis control. This Synechocystis sp. (strain ATCC 27184 / PCC 6803 / Kazusa) protein is GTPase Obg.